Here is a 101-residue protein sequence, read N- to C-terminus: Small ribosomal subunit protein bS18c (101 aa).

This sequence belongs to the bacterial ribosomal protein bS18 family. In terms of assembly, part of the 30S ribosomal subunit.

It is found in the plastid. The protein resides in the chloroplast. The chain is Small ribosomal subunit protein bS18c from Vitis vinifera (Grape).